Consider the following 463-residue polypeptide: Homoserine O-acetyltransferase FUB5 (463 aa).

The region spanning 113 to 436 (NVMIICHALS…VSDDGHDAFL (324 aa)) is the AB hydrolase-1 domain. The active-site Nucleophile is the S211. Over residues 296-312 (RFGRDTGSKKKTQKQES) the composition is skewed to basic and acidic residues. The disordered stretch occupies residues 296–331 (RFGRDTGSKKKTQKQESKTLPSNSTPIHSHSGADET). Catalysis depends on residues D403 and H432.

It belongs to the AB hydrolase superfamily. MetX family.

The catalysed reaction is L-homoserine + acetyl-CoA = O-acetyl-L-homoserine + CoA. It participates in mycotoxin biosynthesis. Functionally, homoserine O-acetyltransferase; part of the gene cluster that mediates the biosynthesis of fusaric acid, a mycotoxin with low to moderate toxicity to animals and humans, but with high phytotoxic properties. L-aspartate is suggested as fusaric acid amino acid precursor that is activated and further processed to O-acetyl-L-homoserine by cluster enzymes aspartate kinase FUB3 and homoserine O-acetyltransferase FUB5, as well as enzymes of the primary metabolism. The polyketide synthase (PKS) FUB1 generates the triketide trans-2-hexenal which is presumptively released by the hydrolase FUB4 and linked to the NRPS-bound amino acid precursor by NAD(P)-dependent dehydrogenase FUB6. FUB1, FUB4, and the non-canonical NRPS Fub8 may form an enzyme complex. Further processing of the NRPS-bound intermediate might be carried out by FUB6 and the sulfhydrylase FUB7, enabling a spontaneous electrocyclization to close the carbon backbone of fusaric acid. Dihydrofusaric acid is likely to be released via reduction by the thioester reductase (TR) domain of FUB8 whereupon the final oxidation to fusaric acid may (also) be performed by the FMN-dependent dehydrogenase FUB9. The chain is Homoserine O-acetyltransferase FUB5 from Gibberella moniliformis (strain M3125 / FGSC 7600) (Maize ear and stalk rot fungus).